Consider the following 501-residue polypeptide: UDP-N-acetylmuramoyl-L-alanyl-D-glutamate--2,6-diaminopimelate ligase (501 aa).

S29 serves as a coordination point for UDP-N-acetyl-alpha-D-muramoyl-L-alanyl-D-glutamate. ATP is bound at residue 112 to 118 (GTNGKTS). UDP-N-acetyl-alpha-D-muramoyl-L-alanyl-D-glutamate contacts are provided by residues 161-162 (TT), S188, and R196. Position 228 is an N6-carboxylysine (K228). Residues R393, 417–420 (DNPR), G468, and E472 contribute to the meso-2,6-diaminopimelate site. The Meso-diaminopimelate recognition motif signature appears at 417–420 (DNPR).

The protein belongs to the MurCDEF family. MurE subfamily. The cofactor is Mg(2+). Carboxylation is probably crucial for Mg(2+) binding and, consequently, for the gamma-phosphate positioning of ATP.

The protein localises to the cytoplasm. The enzyme catalyses UDP-N-acetyl-alpha-D-muramoyl-L-alanyl-D-glutamate + meso-2,6-diaminopimelate + ATP = UDP-N-acetyl-alpha-D-muramoyl-L-alanyl-gamma-D-glutamyl-meso-2,6-diaminopimelate + ADP + phosphate + H(+). It participates in cell wall biogenesis; peptidoglycan biosynthesis. Its function is as follows. Catalyzes the addition of meso-diaminopimelic acid to the nucleotide precursor UDP-N-acetylmuramoyl-L-alanyl-D-glutamate (UMAG) in the biosynthesis of bacterial cell-wall peptidoglycan. The polypeptide is UDP-N-acetylmuramoyl-L-alanyl-D-glutamate--2,6-diaminopimelate ligase (Acidovorax sp. (strain JS42)).